We begin with the raw amino-acid sequence, 505 residues long: Catalase (505 aa).

The tract at residues 1-25 (MSQQDKKLTGVFGHPVSDRENSMTA) is disordered. Catalysis depends on residues H56 and N129. Y339 contributes to the heme binding site.

This sequence belongs to the catalase family. As to quaternary structure, homodimer. Requires heme as cofactor.

The enzyme catalyses 2 H2O2 = O2 + 2 H2O. Decomposes hydrogen peroxide into water and oxygen; serves to protect cells from the toxic effects of hydrogen peroxide. The sequence is that of Catalase (katA) from Staphylococcus aureus (strain MSSA476).